Here is a 144-residue protein sequence, read N- to C-terminus: Large ribosomal subunit protein uL13 (144 aa).

Belongs to the universal ribosomal protein uL13 family. In terms of assembly, part of the 50S ribosomal subunit.

In terms of biological role, this protein is one of the early assembly proteins of the 50S ribosomal subunit, although it is not seen to bind rRNA by itself. It is important during the early stages of 50S assembly. In Clostridium perfringens (strain 13 / Type A), this protein is Large ribosomal subunit protein uL13.